Reading from the N-terminus, the 239-residue chain is UPF0173 metal-dependent hydrolase Dvul_0081 (239 aa).

The protein belongs to the UPF0173 family.

This is UPF0173 metal-dependent hydrolase Dvul_0081 from Nitratidesulfovibrio vulgaris (strain DP4) (Desulfovibrio vulgaris).